Reading from the N-terminus, the 408-residue chain is MSAEIKKTGVKKVVLAYSGGLDTSAIIPWLKETYDDCEIVAFCADVGQGEAELEGLHEKAIASGASECYIVDLKEELVADYIYPTIATGAIYEGTYLLGTSMARPIIAKAQVEVARKVGADAVCHGCTGKGNDQVRFEGCFAALAPDLKVIAPWREWEMVSREDLLDYLAERNIETTASATKIYSRDANAWHISHEGGELEDPWNEPTKGVWTMTVAPEDAPDKPEYVTIDIEQGKITKVNGELLSPYAALMVLNEIAGAHGVGRIDITENRLVGMKSRGCYETPGGTVMFAALRAIEELVLDKSSREWREQVGAQMAHLVYDGRWFTPLCESLLGASQPLANLVNGEVVIKLYKGQAQAVQKRSPNSLYSEEFATFGEDDVYNQKDAEGFIRLYSLASRIRALNSKS.

ATP is bound by residues 16 to 24 and Ala-44; that span reads AYSGGLDTS. L-citrulline-binding residues include Tyr-96 and Ser-101. Gly-126 provides a ligand contact to ATP. L-aspartate-binding residues include Thr-128, Asn-132, and Asp-133. Asn-132 lines the L-citrulline pocket. Arg-136, Ser-185, Ser-194, Glu-270, and Tyr-282 together coordinate L-citrulline.

This sequence belongs to the argininosuccinate synthase family. Type 1 subfamily. As to quaternary structure, homotetramer.

It localises to the cytoplasm. It catalyses the reaction L-citrulline + L-aspartate + ATP = 2-(N(omega)-L-arginino)succinate + AMP + diphosphate + H(+). It participates in amino-acid biosynthesis; L-arginine biosynthesis; L-arginine from L-ornithine and carbamoyl phosphate: step 2/3. The polypeptide is Argininosuccinate synthase (Shewanella woodyi (strain ATCC 51908 / MS32)).